A 425-amino-acid chain; its full sequence is Enolase (425 aa).

Residues 31-54 (TGSAIVPSGASTGEKEAVELRDSD) form a disordered region. The span at 43-54 (GEKEAVELRDSD) shows a compositional bias: basic and acidic residues. Gln-162 serves as a coordination point for (2R)-2-phosphoglycerate. The active-site Proton donor is Glu-204. The Mg(2+) site is built by Asp-241, Glu-285, and Asp-312. Lys-337, Arg-366, Ser-367, and Lys-388 together coordinate (2R)-2-phosphoglycerate. Lys-337 serves as the catalytic Proton acceptor.

This sequence belongs to the enolase family. Mg(2+) serves as cofactor.

The protein resides in the cytoplasm. It localises to the secreted. Its subcellular location is the cell surface. It carries out the reaction (2R)-2-phosphoglycerate = phosphoenolpyruvate + H2O. It participates in carbohydrate degradation; glycolysis; pyruvate from D-glyceraldehyde 3-phosphate: step 4/5. Its function is as follows. Catalyzes the reversible conversion of 2-phosphoglycerate (2-PG) into phosphoenolpyruvate (PEP). It is essential for the degradation of carbohydrates via glycolysis. The polypeptide is Enolase (Gloeobacter violaceus (strain ATCC 29082 / PCC 7421)).